Here is a 572-residue protein sequence, read N- to C-terminus: Periplasmic pectate lyase (572 aa).

The first 23 residues, 1-23 (MKKRALLLSMSVLAMLYIPAGQA), serve as a signal peptide directing secretion.

Belongs to the polysaccharide lyase 2 family.

Its subcellular location is the periplasm. The enzyme catalyses Eliminative cleavage of (1-&gt;4)-alpha-D-galacturonan to give oligosaccharides with 4-deoxy-alpha-D-galact-4-enuronosyl groups at their non-reducing ends.. It functions in the pathway glycan metabolism; pectin degradation; 2-dehydro-3-deoxy-D-gluconate from pectin: step 2/5. This chain is Periplasmic pectate lyase (pelY), found in Yersinia pseudotuberculosis serotype I (strain IP32953).